We begin with the raw amino-acid sequence, 117 residues long: MALKIRLSRGGSKKRPYYHIVVADARSPRDGRFLERVGAWDPMLPKDGPRVKLNEERIQYWLGQGAQPTDRVLRFLDAVGLKKRPNRNNPHKGQPGKKAQERISAAKQVAEAESAPV.

A compositionally biased stretch (basic residues) spans 81-90; sequence LKKRPNRNNP. Residues 81–117 form a disordered region; the sequence is LKKRPNRNNPHKGQPGKKAQERISAAKQVAEAESAPV.

Belongs to the bacterial ribosomal protein bS16 family.

The protein is Small ribosomal subunit protein bS16 of Bartonella quintana (strain Toulouse) (Rochalimaea quintana).